A 188-amino-acid polypeptide reads, in one-letter code: MPKRKKQNHHQPPTQQQPPLPEREETGDEEDGSPIGPPSLLGPPPMANGKPGDPKSALHRGPPGSRGPLIPPLLSLPPPPWGRGPIRRGLGPRSSPYGRGWWGVNAEPPFPGPGHGGPTRGSFHKEQRNPRRLKSWSLIKNTCPPKDDPQVMEDKSDRPVCRHFAKKGHCRYEDLCAFYHPGVNGPPL.

A disordered region spans residues 1–157; that stretch reads MPKRKKQNHH…DPQVMEDKSD (157 aa). Pro residues-rich tracts occupy residues 35–46 and 69–82; these read IGPPSLLGPPPM and LIPP…PPWG. Residues 83-96 are compositionally biased toward low complexity; sequence RGPIRRGLGPRSSP. Residues 145 to 157 are compositionally biased toward basic and acidic residues; that stretch reads PKDDPQVMEDKSD. A C3H1-type zinc finger spans residues 155-183; the sequence is KSDRPVCRHFAKKGHCRYEDLCAFYHPGV.

This is Proline-rich protein 3 (PRR3) from Homo sapiens (Human).